We begin with the raw amino-acid sequence, 320 residues long: Cytochrome f (320 aa).

An N-terminal signal peptide occupies residues 1-35 (MQTRNTFSWIKEEITRSISVSLMIYIITGASISNA). Tyr36, Cys56, Cys59, and His60 together coordinate heme. A helical transmembrane segment spans residues 286 to 306 (VQGLLFFLASIVFAQIFLVLK).

It belongs to the cytochrome f family. The 4 large subunits of the cytochrome b6-f complex are cytochrome b6, subunit IV (17 kDa polypeptide, petD), cytochrome f and the Rieske protein, while the 4 small subunits are PetG, PetL, PetM and PetN. The complex functions as a dimer. Heme serves as cofactor.

The protein localises to the plastid. Its subcellular location is the chloroplast thylakoid membrane. Its function is as follows. Component of the cytochrome b6-f complex, which mediates electron transfer between photosystem II (PSII) and photosystem I (PSI), cyclic electron flow around PSI, and state transitions. This chain is Cytochrome f, found in Gossypium barbadense (Sea Island cotton).